Consider the following 439-residue polypeptide: Proline--tRNA ligase (439 aa).

The protein belongs to the class-II aminoacyl-tRNA synthetase family. ProS type 2 subfamily. As to quaternary structure, homodimer.

The protein resides in the cytoplasm. The enzyme catalyses tRNA(Pro) + L-proline + ATP = L-prolyl-tRNA(Pro) + AMP + diphosphate. Catalyzes the attachment of proline to tRNA(Pro) in a two-step reaction: proline is first activated by ATP to form Pro-AMP and then transferred to the acceptor end of tRNA(Pro). The protein is Proline--tRNA ligase of Beijerinckia indica subsp. indica (strain ATCC 9039 / DSM 1715 / NCIMB 8712).